The primary structure comprises 1955 residues: 227 kDa spindle- and centromere-associated protein (1955 aa).

Coiled-coil stretches lie at residues 82–129 (KKRI…NDDV), 152–317 (EWAS…ELES), 385–1747 (VRNI…LIAL), and 1770–1813 (ERIV…ERFI). Disordered stretches follow at residues 1865–1896 (PTEQ…SYTY) and 1912–1955 (MTSS…TFSE). Polar residues predominate over residues 1878 to 1896 (RTSSTIKSSEGTTRESYTY). Basic residues predominate over residues 1938 to 1948 (RKSRPATRKQQ).

It localises to the cytoplasm. The protein localises to the cytoskeleton. The protein resides in the microtubule organizing center. Its subcellular location is the centrosome. It is found in the chromosome. It localises to the centromere. The protein localises to the kinetochore. The protein resides in the spindle. Functionally, may play a role in the organization of the spindle apparatus and its interaction with the centromeres. In Parascaris univalens (Nematode worm), this protein is 227 kDa spindle- and centromere-associated protein (PUMA1).